The primary structure comprises 129 residues: Follitropin subunit beta (129 aa).

A signal peptide spans 1 to 20; that stretch reads MKTLQFFFLFCCWKAICCNS. Cystine bridges form between cysteine 21–cysteine 69, cysteine 35–cysteine 84, cysteine 38–cysteine 122, cysteine 46–cysteine 100, cysteine 50–cysteine 102, and cysteine 105–cysteine 112. Asparagine 25 and asparagine 42 each carry an N-linked (GlcNAc...) asparagine glycan.

Belongs to the glycoprotein hormones subunit beta family. As to quaternary structure, heterodimer. The active follitropin is a heterodimer composed of an alpha chain/CGA shared with other hormones and a unique beta chain/FSHB shown here.

Its subcellular location is the secreted. Functionally, together with the alpha chain CGA constitutes follitropin, the follicle-stimulating hormone, and provides its biological specificity to the hormone heterodimer. Binds FSHR, a G protein-coupled receptor, on target cells to activate downstream signaling pathways. Follitropin is involved in follicle development and spermatogenesis in reproductive organs. The chain is Follitropin subunit beta (FSHB) from Gorilla gorilla gorilla (Western lowland gorilla).